The primary structure comprises 194 residues: Fe/S biogenesis protein NfuA (194 aa).

2 residues coordinate [4Fe-4S] cluster: C152 and C155.

Belongs to the NfuA family. Homodimer. It depends on [4Fe-4S] cluster as a cofactor.

Its function is as follows. Involved in iron-sulfur cluster biogenesis. Binds a 4Fe-4S cluster, can transfer this cluster to apoproteins, and thereby intervenes in the maturation of Fe/S proteins. Could also act as a scaffold/chaperone for damaged Fe/S proteins. This is Fe/S biogenesis protein NfuA from Pseudomonas putida (strain GB-1).